Here is a 256-residue protein sequence, read N- to C-terminus: Stanniocalcin (256 aa).

The N-terminal stretch at 1 to 18 (MLAKFGLCAVFLVLGTAA) is a signal peptide. A propeptide spanning residues 19–33 (TFDTDPEEASPRRAR) is cleaved from the precursor. An N-linked (GlcNAc...) asparagine glycan is attached at asparagine 62.

It belongs to the stanniocalcin family. Homodimer; disulfide-linked. Produced and secreted by the corpuscles of Stannius.

The protein resides in the secreted. Functionally, its primary function is the prevention of hypercalcemia. Upon release into the circulation, it lowers calcium transport by the gills, thereby reducing its rate of influx from the environment into the extracellular compartment. STC also stimulates phosphate reabsorption by renal proximal tubules. The consequence of this action is increased levels of plasma phosphate, which combines with excess calcium and promotes its disposal into bone and scales. This Oncorhynchus kisutch (Coho salmon) protein is Stanniocalcin (stc).